The following is a 181-amino-acid chain: uncharacterized protein (181 aa).

The Macro domain occupies 1–178 (MVVAYKLSNG…VFKKVFDNSL (178 aa)).

This is an uncharacterized protein from Sulfolobus acidocaldarius (strain ATCC 33909 / DSM 639 / JCM 8929 / NBRC 15157 / NCIMB 11770).